Consider the following 394-residue polypeptide: 1-deoxy-D-xylulose 5-phosphate reductoisomerase (394 aa).

NADPH-binding residues include T12, G13, S14, I15, G38, N41, and N132. K133 provides a ligand contact to 1-deoxy-D-xylulose 5-phosphate. E134 is a binding site for NADPH. D156 provides a ligand contact to Mn(2+). Positions 157, 158, 182, and 205 each coordinate 1-deoxy-D-xylulose 5-phosphate. E158 provides a ligand contact to Mn(2+). NADPH is bound at residue G211. 1-deoxy-D-xylulose 5-phosphate-binding residues include S218, N223, K224, and E227. Mn(2+) is bound at residue E227.

It belongs to the DXR family. Mg(2+) serves as cofactor. Mn(2+) is required as a cofactor.

It carries out the reaction 2-C-methyl-D-erythritol 4-phosphate + NADP(+) = 1-deoxy-D-xylulose 5-phosphate + NADPH + H(+). It functions in the pathway isoprenoid biosynthesis; isopentenyl diphosphate biosynthesis via DXP pathway; isopentenyl diphosphate from 1-deoxy-D-xylulose 5-phosphate: step 1/6. Catalyzes the NADPH-dependent rearrangement and reduction of 1-deoxy-D-xylulose-5-phosphate (DXP) to 2-C-methyl-D-erythritol 4-phosphate (MEP). The chain is 1-deoxy-D-xylulose 5-phosphate reductoisomerase from Arthrobacter sp. (strain FB24).